We begin with the raw amino-acid sequence, 442 residues long: Probable 6-phospho-beta-glucosidase (442 aa).

Residue 5–73 coordinates NAD(+); that stretch reads LKIVTIGGGS…VPIDIHLTLD (69 aa). Substrate-binding residues include Arg96 and Asn150. 2 residues coordinate Mn(2+): Cys172 and His202. Tyr256 (proton acceptor) is an active-site residue.

It belongs to the glycosyl hydrolase 4 family. The cofactor is NAD(+). Requires a divalent metal cation as cofactor.

The enzyme catalyses 6-phospho-beta-D-glucosyl-(1-&gt;4)-D-glucose + H2O = D-glucose 6-phosphate + D-glucose. Hydrolyzes phospho-beta-glucosides. This chain is Probable 6-phospho-beta-glucosidase (licH), found in Bacillus subtilis (strain 168).